A 217-amino-acid polypeptide reads, in one-letter code: Probable transaldolase (217 aa).

The Schiff-base intermediate with substrate role is filled by lysine 83.

It belongs to the transaldolase family. Type 3B subfamily.

It is found in the cytoplasm. The enzyme catalyses D-sedoheptulose 7-phosphate + D-glyceraldehyde 3-phosphate = D-erythrose 4-phosphate + beta-D-fructose 6-phosphate. The protein operates within carbohydrate degradation; pentose phosphate pathway; D-glyceraldehyde 3-phosphate and beta-D-fructose 6-phosphate from D-ribose 5-phosphate and D-xylulose 5-phosphate (non-oxidative stage): step 2/3. Transaldolase is important for the balance of metabolites in the pentose-phosphate pathway. This Maricaulis maris (strain MCS10) (Caulobacter maris) protein is Probable transaldolase.